Here is a 1091-residue protein sequence, read N- to C-terminus: MSEGTVKENNNEEFNAYHTLTTEEAAEFIGTSLTEGLTQDESLRRLKAVGENTLGDDTKIDYKAMVLHQVCNAMIMVLVISMAISFAVRDWITGGVISFVIAVNVLIGLVQEYKATKTMNSLKNLSSPNAHVIRNGKSETINSKDVVPGDICLVKVGDTIPADLRLIETKNFDTDESLLTGESLPVSKDANLVFGKEEETSVGDRLNLAFSSSAVVKGRAKGIVIKTALNSEIGKIAKSLQGDSGLISRDPSKSWLQNTWISTKKVTGAFLGTNVGTPLHRKLSKLAVLLFWIAVLFAIIVMASQKFDVDKRVAIYAICVALSMIPSSLVVVLTITMSVGAAVMVSRNVIVRKLDSLEALGAVNDICSDKTGTLTQGKMLARQIWIPRFGTITISNSDDPFNPNEGNVSLIPRFSPYEYSHNEDGDVGILQNFKDRLYEKDLPEDIDMDLFQKWLETATLANIATVFKDDATDCWKAHGDPTEIAIQVFATKMDLPHNALTGEKSTNQSNENDQSSLSQHNEKPGSAQFEHIAEFPFDSTVKRMSSVYYNNHNETYNIYGKGAFESIISCCSSWYGKDGVKITPLTDCDVETIRKNVYSLSNEGLRVLGFASKSFTKDQVNDDQLKNITSNRATAESDLVFLGLIGIYDPPRNETAGAVKKFHQAGINVHMLTGDFVGTAKAIAQEVGILPTNLYHYSQEIVDSMVMTGSQFDGLSEEEVDDLPVLPLVIARCSPQTKVRMIEALHRRKKFCAMTGDGVNDSPSLKMANVGIAMGINGSDVSKEASDIVLSDDNFASILNAVEEGRRMTDNIQKFVLQLLAENVAQALYLIIGLVFRDENGKSVFPLSPVEVLWIIVVTSCFPAMGLGLEKAAPDLMDRPPHDSEVGIFTWEVIIDTFAYGIIMTGSCMASFTGSLYGINSGRLGHDCDGTYNSSCRDVYRSRSAAFATMTWCALILAWEVVDMRRSFFRMHPDTDSPVKEFFRSIWGNQFLFWSIIFGFVSAFPVVYIPVINDKVFLHKPIGAEWGLAIAFTIAFWIGAELYKCGKRRYFKTQRAHNPENDLESNNKRDPFEAYSTSTTIHTEVNIGIKQ.

The Cytoplasmic portion of the chain corresponds to M1–K63. A helical membrane pass occupies residues A64–I84. Residues S85–D90 lie on the Extracellular side of the membrane. Residues W91 to Q111 form a helical membrane-spanning segment. The Cytoplasmic segment spans residues E112–K282. A helical membrane pass occupies residues L283–A303. The Extracellular portion of the chain corresponds to S304–R312. Residues V313–L333 form a helical membrane-spanning segment. Residues T334–F815 are Cytoplasmic-facing. The active-site 4-aspartylphosphate intermediate is the D369. Mg(2+)-binding residues include D369 and T371. The ATP site is built by T371 and E483. The segment at A499–G525 is disordered. Polar residues predominate over residues E503–Q519. 7 residues coordinate ATP: K561, R606, T673, G674, D675, R732, and K738. D757 is a binding site for Mg(2+). ATP is bound at residue N760. A helical transmembrane segment spans residues V816–F836. Residues R837 to S848 are Extracellular-facing. A helical transmembrane segment spans residues P849 to L869. The Cytoplasmic segment spans residues E870–E885. The helical transmembrane segment at V886–G906 threads the bilayer. Residues S907 to R943 lie on the Extracellular side of the membrane. The helical transmembrane segment at S944–M964 threads the bilayer. At R965–F991 the chain is on the cytoplasmic side. Residues L992 to I1012 form a helical membrane-spanning segment. The Extracellular segment spans residues N1013–P1021. Residues I1022 to L1042 form a helical membrane-spanning segment. At Y1043 to Q1091 the chain is on the cytoplasmic side.

It belongs to the cation transport ATPase (P-type) (TC 3.A.3) family. Type IID subfamily. Requires Mg(2+) as cofactor. Post-translationally, the active site is phosphorylated in presence of sodium or potassium and in conditions of higher pH. Not phosphorylated in presence of calcium ions.

The protein resides in the cell membrane. The catalysed reaction is Na(+)(in) + ATP + H2O = Na(+)(out) + ADP + phosphate + H(+). It catalyses the reaction K(+)(in) + ATP + H2O = K(+)(out) + ADP + phosphate + H(+). Catalyzes the hydrolysis of ATP coupled with the export of sodium and potassium from the cell. May export potassium less efficiently. May transport other cations such as lithium. Sodium/potassium efflux ATPases are involved in salt tolerance and maintaining the membrane potential across the plasma membrane in high salinity (Na+) or alkaline (K+) environments. The sequence is that of Sodium/potassium exporting P-type ATPase 2 from Saccharomyces cerevisiae (strain ATCC 204508 / S288c) (Baker's yeast).